The sequence spans 150 residues: Ribosome maturation factor RimP (150 aa).

This sequence belongs to the RimP family.

The protein resides in the cytoplasm. Its function is as follows. Required for maturation of 30S ribosomal subunits. The protein is Ribosome maturation factor RimP of Yersinia pestis bv. Antiqua (strain Antiqua).